An 879-amino-acid chain; its full sequence is Probable phospholipid transport protein YdbH (879 aa).

Over 1–6 (MLGKYK) the chain is Cytoplasmic. The chain crosses the membrane as a helical span at residues 7 to 29 (AVLALLLLIILVPLTLLMTLGLW). Topologically, residues 30–879 (VPTLAGIWLP…PQGKECEEKQ (850 aa)) are periplasmic.

Interacts with the outer membrane lipoprotein YnbE.

It localises to the cell inner membrane. Functionally, involved in outer membrane lipid homeostasis. Interacts with the outer membrane lipoprotein YnbE to form a functional protein bridge connecting the inner and outer membranes of the cell. Likely transports phospholipids between the inner membrane and the outer membrane. It would provide a bridge-like structure that protects phospholipids as they travel across the periplasm. TamB, YdbH and YhdP are redundant, but not equivalent, in performing an essential function for growth and maintaining lipid homeostasis in the outer membrane. Any of these three proteins is sufficient for growth. This is Probable phospholipid transport protein YdbH (ydbH) from Escherichia coli (strain K12).